A 697-amino-acid chain; its full sequence is Potassium-transporting ATPase ATP-binding subunit (697 aa).

Helical transmembrane passes span Val-36–Ile-56, Leu-66–Ala-86, Ile-218–Ile-238, and Val-253–Ile-273. Catalysis depends on Asp-306, which acts as the 4-aspartylphosphate intermediate. ATP-binding positions include Asp-343, Glu-347, Phe-376–Ser-383, and Lys-394. Positions 526 and 530 each coordinate Mg(2+). The next 3 helical transmembrane spans lie at Tyr-595–Gly-615, Ala-631–Leu-651, and Leu-669–Met-689.

Belongs to the cation transport ATPase (P-type) (TC 3.A.3) family. Type IA subfamily. In terms of assembly, the system is composed of three essential subunits: KdpA, KdpB and KdpC.

The protein localises to the cell inner membrane. It carries out the reaction K(+)(out) + ATP + H2O = K(+)(in) + ADP + phosphate + H(+). Functionally, part of the high-affinity ATP-driven potassium transport (or Kdp) system, which catalyzes the hydrolysis of ATP coupled with the electrogenic transport of potassium into the cytoplasm. This subunit is responsible for energy coupling to the transport system and for the release of the potassium ions to the cytoplasm. The protein is Potassium-transporting ATPase ATP-binding subunit of Mesorhizobium japonicum (strain LMG 29417 / CECT 9101 / MAFF 303099) (Mesorhizobium loti (strain MAFF 303099)).